A 335-amino-acid chain; its full sequence is 2-acylglycerol O-acyltransferase 1 (335 aa).

2 helical membrane-spanning segments follow: residues 24–44 (WLLS…FLII) and 104–124 (YIFG…NFCT). N-linked (GlcNAc...) asparagine glycosylation is found at Asn-125 and Asn-180.

Belongs to the diacylglycerol acyltransferase family.

It localises to the endoplasmic reticulum membrane. It catalyses the reaction a 2-acylglycerol + an acyl-CoA = a 1,2-diacylglycerol + CoA. The enzyme catalyses 2-(9Z-octadecenoyl)-glycerol + butanoyl-CoA = 1-butanoyl-2-(9Z-octadecenoyl)-glycerol + CoA. The catalysed reaction is 2-(9Z-octadecenoyl)-glycerol + octanoyl-CoA = 1-octanoyl-2-(9Z-octadecenoyl)-glycerol + CoA. It carries out the reaction 2-(9Z-octadecenoyl)-glycerol + dodecanoyl-CoA = 1-dodecanoyl-2-(9Z-octadecenoyl)-glycerol + CoA. It catalyses the reaction 2-(9Z-octadecenoyl)-glycerol + tetradecanoyl-CoA = 1-tetradecanoyl-2-(9Z-octadecenoyl)-glycerol + CoA. The enzyme catalyses 2-(9Z-octadecenoyl)-glycerol + hexadecanoyl-CoA = 1-hexadecanoyl-2-(9Z-octadecenoyl)-glycerol + CoA. The catalysed reaction is 2-(9Z-octadecenoyl)-glycerol + octadecanoyl-CoA = 1-octadecanoyl-2-(9Z-octadecenoyl)-glycerol + CoA. It carries out the reaction eicosanoyl-CoA + 2-(9Z-octadecenoyl)-glycerol = 1-eicosanoyl-2-(9Z-octadecenoyl)-glycerol + CoA. It catalyses the reaction 2-(9Z-octadecenoyl)-glycerol + (9Z)-octadecenoyl-CoA = 1,2-di-(9Z-octadecenoyl)-glycerol + CoA. The enzyme catalyses 2-(9Z-octadecenoyl)-glycerol + (9Z,12Z)-octadecadienoyl-CoA = 1-(9Z,12Z-octadecadienoyl)-2-(9Z-octadecenoyl)-glycerol + CoA. The catalysed reaction is 2-(9Z-octadecenoyl)-glycerol + (5Z,8Z,11Z,14Z)-eicosatetraenoyl-CoA = 1-(5Z,8Z,11Z,14Z-eicosatetraenoyl)-2-(9Z-octadecenoyl)-glycerol + CoA. It carries out the reaction a 2-acylglycerol + an acyl-CoA = a 1,2-diacyl-sn-glycerol + CoA. It catalyses the reaction a 2-acylglycerol + an acyl-CoA = a 2,3-diacyl-sn-glycerol + CoA. The enzyme catalyses a 1-acylglycerol + an acyl-CoA = a 1,2-diacylglycerol + CoA. The catalysed reaction is 1-dodecanoylglycerol + (9Z)-octadecenoyl-CoA = 1-dodecanoyl-2-(9Z-octadecenoyl)-glycerol + CoA. It carries out the reaction 1-tetradecanoylglycerol + (9Z)-octadecenoyl-CoA = 1-tetradecanoyl-2-(9Z-octadecenoyl)-glycerol + CoA. It catalyses the reaction 1-hexadecanoylglycerol + (9Z)-octadecenoyl-CoA = 1-hexadecanoyl-2-(9Z-octadecenoyl)-glycerol + CoA. The enzyme catalyses 1-(9Z-octadecenoyl)-glycerol + (9Z)-octadecenoyl-CoA = 1,2-di-(9Z-octadecenoyl)-glycerol + CoA. The catalysed reaction is 1-(9Z,12Z-octadecadienoyl)-glycerol + (9Z)-octadecenoyl-CoA = 1-(9Z,12Z-octadecadienoyl)-2-(9Z-octadecenoyl)-glycerol + CoA. It carries out the reaction 1-(9Z,12Z,15Z-octadecatrienoyl)-glycerol + (9Z)-octadecenoyl-CoA = 1-(9Z,12Z,15Z-octadecatrienoyl)-2-(9Z-octadecenoyl)-glycerol + CoA. It catalyses the reaction 1-(5Z,8Z,11Z,14Z-eicosatetraenoyl)-glycerol + (9Z)-octadecenoyl-CoA = 1-(5Z,8Z,11Z,14Z-eicosatetraenoyl)-2-(9Z-octadecenoyl)-glycerol + CoA. The enzyme catalyses a 1-acylglycerol + an acyl-CoA = a 1,3-diacylglycerol + CoA. The catalysed reaction is 1-dodecanoylglycerol + (9Z)-octadecenoyl-CoA = 1-dodecanoyl-3-(9Z-octadecenoyl)-glycerol + CoA. It carries out the reaction 1-hexadecanoylglycerol + (9Z)-octadecenoyl-CoA = 1-(9Z-octadecenoyl)-3-hexadecanoylglycerol + CoA. It catalyses the reaction 1-octadecanoylglycerol + (9Z)-octadecenoyl-CoA = 1-octadecanoyl-3-(9Z-octadecenoyl)-glycerol + CoA. The enzyme catalyses 1-(9Z-octadecenoyl)-sn-glycerol + (9Z)-octadecenoyl-CoA = 1,3-di-(9Z-octadecenoyl)-glycerol + CoA. The catalysed reaction is 1-(9Z,12Z-octadecadienoyl)-glycerol + (9Z)-octadecenoyl-CoA = 1-(9Z-octadecenoyl)-3-(9Z,12Z-octadecadienoyl)-glycerol + CoA. It carries out the reaction 1-(9Z,12Z,15Z-octadecatrienoyl)-glycerol + (9Z)-octadecenoyl-CoA = 1-(9Z,12Z,15Z-octadecatrienoyl)-3-(9Z-octadecenoyl)-glycerol + CoA. It catalyses the reaction a 1-acyl-sn-glycerol + an acyl-CoA = a 1,3-diacyl-sn-glycerol + CoA. The enzyme catalyses a 3-acyl-sn-glycerol + an acyl-CoA = a 1,3-diacyl-sn-glycerol + CoA. The catalysed reaction is 3-octadecanoyl-sn-glycerol + (9Z)-octadecenoyl-CoA = 1-(9Z-octadecenoyl)-3-octadecanoyl-sn-glycerol + CoA. It participates in glycerolipid metabolism; triacylglycerol biosynthesis. In terms of biological role, involved in glycerolipid synthesis and lipid metabolism. Catalyzes the formation of diacylglycerol, the precursor of triacylglycerol, by transferring the acyl chain of a fatty acyl-CoA to a monoacylglycerol, mainly at the sn-1 or sn-3 positions. It uses both sn-2-monoacylglycerol (2-acylglycerol) and sn-1-monoacylglycerol (1-acyl-sn-glycerol) equally well as substrates, and uses sn-3-monoacylglycerol (3-acyl-sn-glycerol) with lower efficiency. Probably not involved in absorption of dietary fat in the small intestine. The chain is 2-acylglycerol O-acyltransferase 1 (MOGAT1) from Bos taurus (Bovine).